The primary structure comprises 300 residues: GTPase Era (300 aa).

Positions 4 to 172 constitute an Era-type G domain; that stretch reads KSGFVALIGR…LEKIKKLLPE (169 aa). The segment at 12–19 is G1; the sequence is GRPNVGKS. 12 to 19 serves as a coordination point for GTP; that stretch reads GRPNVGKS. The segment at 38 to 42 is G2; sequence QTTRN. The tract at residues 59 to 62 is G3; it reads DTPG. GTP contacts are provided by residues 59–63 and 122–125; these read DTPGV and NKAD. Residues 122 to 125 are G4; sequence NKAD. The tract at residues 151-153 is G5; the sequence is IAA. Residues 195 to 281 enclose the KH type-2 domain; the sequence is IREKILLNLS…NLQLWVKVKK (87 aa).

This sequence belongs to the TRAFAC class TrmE-Era-EngA-EngB-Septin-like GTPase superfamily. Era GTPase family. In terms of assembly, monomer.

The protein localises to the cytoplasm. Its subcellular location is the cell membrane. Its function is as follows. An essential GTPase that binds both GDP and GTP, with rapid nucleotide exchange. Plays a role in 16S rRNA processing and 30S ribosomal subunit biogenesis and possibly also in cell cycle regulation and energy metabolism. The polypeptide is GTPase Era (Caldicellulosiruptor saccharolyticus (strain ATCC 43494 / DSM 8903 / Tp8T 6331)).